The primary structure comprises 225 residues: 2-C-methyl-D-erythritol 4-phosphate cytidylyltransferase (225 aa).

Belongs to the IspD/TarI cytidylyltransferase family. IspD subfamily.

It catalyses the reaction 2-C-methyl-D-erythritol 4-phosphate + CTP + H(+) = 4-CDP-2-C-methyl-D-erythritol + diphosphate. The protein operates within isoprenoid biosynthesis; isopentenyl diphosphate biosynthesis via DXP pathway; isopentenyl diphosphate from 1-deoxy-D-xylulose 5-phosphate: step 2/6. Functionally, catalyzes the formation of 4-diphosphocytidyl-2-C-methyl-D-erythritol from CTP and 2-C-methyl-D-erythritol 4-phosphate (MEP). The chain is 2-C-methyl-D-erythritol 4-phosphate cytidylyltransferase from Haemophilus influenzae (strain PittEE).